Here is a 233-residue protein sequence, read N- to C-terminus: 7-cyano-7-deazaguanine synthase (233 aa).

8–18 (FSGGQDSTTCL) serves as a coordination point for ATP. 4 residues coordinate Zn(2+): C188, C197, C200, and C203.

This sequence belongs to the QueC family. It depends on Zn(2+) as a cofactor.

The enzyme catalyses 7-carboxy-7-deazaguanine + NH4(+) + ATP = 7-cyano-7-deazaguanine + ADP + phosphate + H2O + H(+). Its pathway is purine metabolism; 7-cyano-7-deazaguanine biosynthesis. In terms of biological role, catalyzes the ATP-dependent conversion of 7-carboxy-7-deazaguanine (CDG) to 7-cyano-7-deazaguanine (preQ(0)). The sequence is that of 7-cyano-7-deazaguanine synthase from Klebsiella pneumoniae (strain 342).